A 295-amino-acid polypeptide reads, in one-letter code: MTKPIPAASGTAPAALFGASDVRRLAEEIGVRPTKTLGQNFVIDGNTIRRIVAAADIHADETVLEVGPGLGSLTLGLLDAAKSVVAVEIDPVLAAKLPGTVQQWRPGAAKDFHLVLADAMKVTELPVEPTALVANLPYNVAVPVVLHLLQHFPSLRHGLVMVQDEVADRLAAGPGSKTYGVPSVKAAWYSSMRKAGVIGMNVFWPAPKIHSGLVAFTRREPPVTSATREQVFAVIDAAFAQRRKTLRAALAGWAGSAAEAEQCLLAAGVDPTARGEVIDIAAFARIAEARQDRQA.

The S-adenosyl-L-methionine site is built by Asn40, Val42, Gly67, Glu88, Asp118, and Asn135.

It belongs to the class I-like SAM-binding methyltransferase superfamily. rRNA adenine N(6)-methyltransferase family. RsmA subfamily.

The protein localises to the cytoplasm. It carries out the reaction adenosine(1518)/adenosine(1519) in 16S rRNA + 4 S-adenosyl-L-methionine = N(6)-dimethyladenosine(1518)/N(6)-dimethyladenosine(1519) in 16S rRNA + 4 S-adenosyl-L-homocysteine + 4 H(+). Its function is as follows. Specifically dimethylates two adjacent adenosines (A1518 and A1519) in the loop of a conserved hairpin near the 3'-end of 16S rRNA in the 30S particle. May play a critical role in biogenesis of 30S subunits. In Arthrobacter sp. (strain FB24), this protein is Ribosomal RNA small subunit methyltransferase A.